A 303-amino-acid chain; its full sequence is N-acetyl-D-glucosamine kinase (303 aa).

ATP-binding positions include 4–11 (GFDIGGTK) and 133–140 (GVGGGLVL). Zn(2+) is bound by residues His157, Cys177, Cys179, and Cys184.

It belongs to the ROK (NagC/XylR) family. NagK subfamily.

The enzyme catalyses N-acetyl-D-glucosamine + ATP = N-acetyl-D-glucosamine 6-phosphate + ADP + H(+). It functions in the pathway cell wall biogenesis; peptidoglycan recycling. Its function is as follows. Catalyzes the phosphorylation of N-acetyl-D-glucosamine (GlcNAc) derived from cell-wall degradation, yielding GlcNAc-6-P. The polypeptide is N-acetyl-D-glucosamine kinase (Salmonella choleraesuis (strain SC-B67)).